The primary structure comprises 461 residues: Ribulose bisphosphate carboxylase (461 aa).

Asparagine 112 provides a ligand contact to substrate. The Proton acceptor role is filled by lysine 167. Lysine 169 serves as a coordination point for substrate. Residues lysine 192, aspartate 194, and glutamate 195 each contribute to the Mg(2+) site. Lysine 192 carries the post-translational modification N6-carboxylysine. Histidine 288 serves as the catalytic Proton acceptor. Substrate contacts are provided by arginine 289, histidine 322, and serine 369.

The protein belongs to the RuBisCO large chain family. Type II subfamily. Homodimer. The cofactor is Mg(2+).

It carries out the reaction 2 (2R)-3-phosphoglycerate + 2 H(+) = D-ribulose 1,5-bisphosphate + CO2 + H2O. The enzyme catalyses D-ribulose 1,5-bisphosphate + O2 = 2-phosphoglycolate + (2R)-3-phosphoglycerate + 2 H(+). In terms of biological role, ruBisCO catalyzes two reactions: the carboxylation of D-ribulose 1,5-bisphosphate, the primary event in carbon dioxide fixation, as well as the oxidative fragmentation of the pentose substrate. Both reactions occur simultaneously and in competition at the same active site. This chain is Ribulose bisphosphate carboxylase, found in Rhodopseudomonas palustris (strain BisB18).